The sequence spans 427 residues: SAC3 domain-containing protein 1 (427 aa).

Composition is skewed to basic and acidic residues over residues 1 to 10 (MGRFKGENRS) and 117 to 127 (ADPKRTVKEYS). Disordered regions lie at residues 1–53 (MGRF…QDAV) and 101–143 (LHRL…LLRP). The span at 134-143 (PRPPPSLLRP) shows a compositional bias: pro residues. In terms of domain architecture, PCI spans 229-397 (QVQEGFGSLR…EGLPPPGAYH (169 aa)). A Phosphoserine modification is found at Ser-425.

This sequence belongs to the SAC3 family. In terms of assembly, may be part of a SEM1-containing complex. As to expression, present in spleen cells (at protein level).

The protein localises to the cytoplasm. It localises to the cytoskeleton. Its subcellular location is the microtubule organizing center. It is found in the centrosome. The protein resides in the spindle. Its function is as follows. Involved in centrosome duplication and mitotic progression. The sequence is that of SAC3 domain-containing protein 1 (Sac3d1) from Mus musculus (Mouse).